Consider the following 699-residue polypeptide: Keratinocyte proline-rich protein (699 aa).

Ser-436 carries the phosphoserine modification. Composition is skewed to pro residues over residues 448-477 (PYPR…PSPE) and 513-533 (DPCP…PSPE). Positions 448-533 (PYPRPEPCPS…PCPEPCPSPE (86 aa)) are disordered.

In terms of tissue distribution, expressed in the stratified squamous epithelial layers of the skin, esophagus and tongue.

The protein localises to the cytoplasm. This is Keratinocyte proline-rich protein (Kprp) from Rattus norvegicus (Rat).